The primary structure comprises 730 residues: Pentatricopeptide repeat-containing protein At5g64320, mitochondrial (730 aa).

The transit peptide at 1 to 18 (MVMLARSKLALDVSRRSQ) directs the protein to the mitochondrion. PPR repeat units lie at residues 110 to 144 (SFDVYQVLIGKLGANGEFKTIDRLLIQMKDEGIVF), 145 to 175 (KESLFISIMRDYDKAGFPGQTTRLMLEMRNV), 181 to 215 (TFKSYNVVLEILVSGNCHKVAANVFYDMLSRKIPP), 216 to 250 (TLFTFGVVMKAFCAVNEIDSALSLLRDMTKHGCVP), 251 to 285 (NSVIYQTLIHSLSKCNRVNEALQLLEEMFLMGCVP), 286 to 320 (DAETFNDVILGLCKFDRINEAAKMVNRMLIRGFAP), 321 to 351 (DDITYGYLMNGLCKIGRVDAAKDLFYRIPKP), 352 to 387 (EIVIFNTLIHGFVTHGRLDDAKAVLSDMVTSYGIVP), 388 to 422 (DVCTYNSLIYGYWKEGLVGLALEVLHDMRNKGCKP), 423 to 457 (NVYSYTILVDGFCKLGKIDEAYNVLNEMSADGLKP), 458 to 492 (NTVGFNCLISAFCKEHRIPEAVEIFREMPRKGCKP), 493 to 527 (DVYTFNSLISGLCEVDEIKHALWLLRDMISEGVVA), 528 to 562 (NTVTYNTLINAFLRRGEIKEARKLVNEMVFQGSPL), 563 to 597 (DEITYNSLIKGLCRAGEVDKARSLFEKMLRDGHAP), 598 to 632 (SNISCNILINGLCRSGMVEEAVEFQKEMVLRGSTP), 633 to 667 (DIVTFNSLINGLCRAGRIEDGLTMFRKLQAEGIPP), and 668 to 702 (DTVTFNTLMSWLCKGGFVYDACLLLDEGIEDGFVP).

The protein belongs to the PPR family. P subfamily.

It localises to the mitochondrion. The chain is Pentatricopeptide repeat-containing protein At5g64320, mitochondrial from Arabidopsis thaliana (Mouse-ear cress).